The following is a 195-amino-acid chain: Pyruvoyl-dependent arginine decarboxylase AaxB (195 aa).

At serine 53 the chain carries Pyruvic acid (Ser).

The protein belongs to the pyruvoyl-dependent arginine decarboxylase family. In terms of assembly, trimer of an alpha-beta dimer. Pyruvate is required as a cofactor.

The protein localises to the cytoplasm. It carries out the reaction L-arginine + H(+) = agmatine + CO2. Functionally, part of the AaxABC system, catalyzes the decarboxylation of L-arginine. The arginine uptake by the bacterium in the macrophage may be a virulence factor against the host innate immune response. This Chlamydia trachomatis serovar D (strain ATCC VR-885 / DSM 19411 / UW-3/Cx) protein is Pyruvoyl-dependent arginine decarboxylase AaxB (aaxB).